We begin with the raw amino-acid sequence, 161 residues long: Vitamin K epoxide reductase complex subunit 1 (161 aa).

The Cytoplasmic segment spans residues 1 to 9; it reads MGTTWRSPG. A helical transmembrane segment spans residues 10–29; it reads RLRLALCLAGLALSLYALHV. Residues 30 to 80 are Lumenal-facing; that stretch reads KAARARNEDYRALCDVGTAISCSRVFSSRWGRGFGLVEHVLGADSILNQSN. An intrachain disulfide couples cysteine 43 to cysteine 51. Asparagine 80 contributes to the (S)-warfarin binding site. Residues 81–95 traverse the membrane as a helical segment; that stretch reads SIFGCMFYTIQLLLG. Residues 96 to 100 are Cytoplasmic-facing; it reads CLRGR. A helical membrane pass occupies residues 101 to 128; sequence WASILLILSSLVSVAGSLYLAWILFFVL. Topologically, residues 129–131 are lumenal; the sequence is YDF. Cysteine 132 and cysteine 135 are disulfide-bonded. Residues 132 to 153 form a helical membrane-spanning segment; it reads CIVCITTYAINAGLMLLSFQKV. Cysteine 135 and tyrosine 139 together coordinate phylloquinone. Tyrosine 139 contacts (S)-warfarin. Residues 154–161 are Cytoplasmic-facing; it reads PEHKVKKP.

Belongs to the VKOR family. In terms of tissue distribution, highly expressed in liver. Detected at lower levels in lung, kidney and testis.

It localises to the endoplasmic reticulum membrane. The enzyme catalyses phylloquinone + [protein]-disulfide + H2O = 2,3-epoxyphylloquinone + [protein]-dithiol. The catalysed reaction is phylloquinol + [protein]-disulfide = phylloquinone + [protein]-dithiol. Its activity is regulated as follows. Inhibited by warfarin (coumadin). Warfarin locks VKORC1 in both redox states into the closed conformation. Its function is as follows. Involved in vitamin K metabolism. Catalytic subunit of the vitamin K epoxide reductase (VKOR) complex which reduces inactive vitamin K 2,3-epoxide to active vitamin K. Vitamin K is required for the gamma-carboxylation of various proteins, including clotting factors, and is required for normal blood coagulation, but also for normal bone development. The polypeptide is Vitamin K epoxide reductase complex subunit 1 (Vkorc1) (Rattus norvegicus (Rat)).